The following is a 1097-amino-acid chain: DNA-directed RNA polymerase subunit beta (1097 aa).

The disordered stretch occupies residues 1073–1097; sequence DVNPRRSTPSRPTYESLGVADYDED.

Belongs to the RNA polymerase beta chain family. As to quaternary structure, in cyanobacteria the RNAP catalytic core is composed of 2 alpha, 1 beta, 1 beta', 1 gamma and 1 omega subunit. When a sigma factor is associated with the core the holoenzyme is formed, which can initiate transcription.

The enzyme catalyses RNA(n) + a ribonucleoside 5'-triphosphate = RNA(n+1) + diphosphate. Functionally, DNA-dependent RNA polymerase catalyzes the transcription of DNA into RNA using the four ribonucleoside triphosphates as substrates. This is DNA-directed RNA polymerase subunit beta from Synechococcus sp. (strain RCC307).